The following is a 676-amino-acid chain: Electrogenic aspartate/glutamate antiporter SLC25A12, mitochondrial (676 aa).

Alanine 2 is subject to N-acetylalanine. Residues 2 to 293 (AVKVHTTKRG…TLADIERIAP (292 aa)) are regulatory N-terminal domain. The Mitochondrial intermembrane segment spans residues 2–328 (AVKVHTTKRG…WLQIAESAYR (327 aa)). Ca(2+) is bound by residues aspartate 65, threonine 67, aspartate 69, leucine 71, and glutamate 76. EF-hand domains lie at 65-76 (DQTKDGLISYQE), 86-121 (APDS…TIIH), 125-155 (PFNW…QFLQ), and 157-192 (LQLE…IRSH). A linker loop domain region spans residues 294–309 (LAEGALPYNLAELQRQ). The carrier domain stretch occupies residues 319 to 611 (WLQIAESAYR…RWFYIDFGGL (293 aa)). 3 Solcar repeats span residues 323–415 (AESA…VRDK), 423–507 (IPLP…CKLL), and 515–603 (VGGI…LQRW). Residues 329-346 (FTLGSVAGAVGATAVYPI) traverse the membrane as a helical segment. The Mitochondrial matrix segment spans residues 347-389 (DLVKTRMQNQRGTGSVVGELMYKNSFDCFKKVLRYEGFFGLYR). Residues 390-409 (GLIPQLIGVAPEKAIKLTVN) traverse the membrane as a helical segment. Topologically, residues 410 to 432 (DFVRDKFTRRDGSIPLPAEILAG) are mitochondrial intermembrane. Residues 433–446 (GCAGGSQVIFTNPL) form a helical membrane-spanning segment. Topologically, residues 447–481 (EIVKIRLQVAGEITTGPRVSALNVLQDLGLFGLYK) are mitochondrial matrix. Residues 482-501 (GAKACFLRDIPFSAIYFPVY) form a helical membrane-spanning segment. The Mitochondrial intermembrane portion of the chain corresponds to 502–520 (AHCKLLLADENGHVGGINL). A helical transmembrane segment spans residues 521–538 (LTAGAMAGVPAASLVTPA). Residues 539 to 577 (DVIKTRLQVAARAGQTTYSGVIDCFRKILREEGPSAFWK) lie on the Mitochondrial matrix side of the membrane. A helical transmembrane segment spans residues 578–597 (GTAARVFRSSPQFGVTLVTY). Residues 598-676 (ELLQRWFYID…AQPKVAAAAQ (79 aa)) are Mitochondrial intermembrane-facing. Residues 612–674 (KPSGSEPTPK…AAAQPKVAAA (63 aa)) are C-terminal domain.

The protein belongs to the mitochondrial carrier (TC 2.A.29) family. Homodimer (via N-terminus).

It localises to the mitochondrion inner membrane. It carries out the reaction L-aspartate(in) + L-glutamate(out) + H(+)(out) = L-aspartate(out) + L-glutamate(in) + H(+)(in). It catalyses the reaction 3-sulfino-L-alanine(out) + L-glutamate(in) + H(+)(in) = 3-sulfino-L-alanine(in) + L-glutamate(out) + H(+)(out). The catalysed reaction is 3-sulfino-L-alanine(out) + L-aspartate(in) = 3-sulfino-L-alanine(in) + L-aspartate(out). Its activity is regulated as follows. L-aspartate and 3-sulfino-L-alanine uptake are both inhibited by glisoxepide. Mitochondrial electrogenic aspartate/glutamate antiporter that favors efflux of aspartate and entry of glutamate and proton within the mitochondria as part of the malate-aspartate shuttle. Also mediates the uptake of L-cysteinesulfinate (3-sulfino-L-alanine) by mitochondria in exchange of L-glutamate and proton. Can also exchange L-cysteinesulfinate with aspartate in their anionic form without any proton translocation. Lacks transport activity towards L-glutamine or gamma-aminobutyric acid (GABA). The sequence is that of Electrogenic aspartate/glutamate antiporter SLC25A12, mitochondrial from Rattus norvegicus (Rat).